We begin with the raw amino-acid sequence, 142 residues long: Large ribosomal subunit protein uL16 (142 aa).

The protein belongs to the universal ribosomal protein uL16 family. As to quaternary structure, part of the 50S ribosomal subunit.

In terms of biological role, binds 23S rRNA and is also seen to make contacts with the A and possibly P site tRNAs. This Phenylobacterium zucineum (strain HLK1) protein is Large ribosomal subunit protein uL16.